Here is a 364-residue protein sequence, read N- to C-terminus: 3-isopropylmalate dehydrogenase (364 aa).

78–91 contributes to the NAD(+) binding site; it reads GKKWDNFPIEERPE. Positions 99, 109, 138, and 228 each coordinate substrate. Residues Asp-228, Asp-252, and Asp-256 each contribute to the Mg(2+) site. Residue 286-298 participates in NAD(+) binding; it reads GSAPDIAGKNIAN.

It belongs to the isocitrate and isopropylmalate dehydrogenases family. LeuB type 1 subfamily. As to quaternary structure, homodimer. The cofactor is Mg(2+). Requires Mn(2+) as cofactor.

The protein resides in the cytoplasm. The enzyme catalyses (2R,3S)-3-isopropylmalate + NAD(+) = 4-methyl-2-oxopentanoate + CO2 + NADH. The protein operates within amino-acid biosynthesis; L-leucine biosynthesis; L-leucine from 3-methyl-2-oxobutanoate: step 3/4. Functionally, catalyzes the oxidation of 3-carboxy-2-hydroxy-4-methylpentanoate (3-isopropylmalate) to 3-carboxy-4-methyl-2-oxopentanoate. The product decarboxylates to 4-methyl-2 oxopentanoate. This is 3-isopropylmalate dehydrogenase from Buchnera aphidicola subsp. Uroleucon obscurum.